We begin with the raw amino-acid sequence, 276 residues long: Diaminopimelate epimerase (276 aa).

Residues Asn-13, Gln-46, and Asn-66 each coordinate substrate. The active-site Proton donor is Cys-75. Residues 76 to 77 (GN), Asn-159, Asn-192, and 210 to 211 (ER) each bind substrate. Catalysis depends on Cys-219, which acts as the Proton acceptor. 220–221 (GT) provides a ligand contact to substrate.

The protein belongs to the diaminopimelate epimerase family. In terms of assembly, homodimer.

It is found in the cytoplasm. It catalyses the reaction (2S,6S)-2,6-diaminopimelate = meso-2,6-diaminopimelate. It functions in the pathway amino-acid biosynthesis; L-lysine biosynthesis via DAP pathway; DL-2,6-diaminopimelate from LL-2,6-diaminopimelate: step 1/1. Catalyzes the stereoinversion of LL-2,6-diaminopimelate (L,L-DAP) to meso-diaminopimelate (meso-DAP), a precursor of L-lysine and an essential component of the bacterial peptidoglycan. This Teredinibacter turnerae (strain ATCC 39867 / T7901) protein is Diaminopimelate epimerase.